The chain runs to 121 residues: Small ribosomal subunit protein uS13 (121 aa).

The segment at 93 to 121 (RGLPMRGQRTRTNARTRKGPRKAAQSLKK) is disordered.

It belongs to the universal ribosomal protein uS13 family. In terms of assembly, part of the 30S ribosomal subunit. Forms a loose heterodimer with protein S19. Forms two bridges to the 50S subunit in the 70S ribosome.

Its function is as follows. Located at the top of the head of the 30S subunit, it contacts several helices of the 16S rRNA. In the 70S ribosome it contacts the 23S rRNA (bridge B1a) and protein L5 of the 50S subunit (bridge B1b), connecting the 2 subunits; these bridges are implicated in subunit movement. Contacts the tRNAs in the A and P-sites. The protein is Small ribosomal subunit protein uS13 of Variovorax paradoxus (strain S110).